Reading from the N-terminus, the 316-residue chain is Peroxidase 67 (316 aa).

The signal sequence occupies residues 1-19 (MLKVVLLMMIMMLASQSEA). A Pyrrolidone carboxylic acid modification is found at Gln20. 4 disulfides stabilise this stretch: Cys30/Cys110, Cys63/Cys68, Cys116/Cys312, and Cys196/Cys221. The active-site Proton acceptor is the His61. Ca(2+) is bound by residues Asp62, Val65, Gly67, Asp69, and Ser71. Pro159 lines the substrate pocket. His189 provides a ligand contact to heme b. Residue Thr190 coordinates Ca(2+). N-linked (GlcNAc...) asparagine glycosylation is present at Asn205. Residues Asp236, Ser239, and Asp244 each coordinate Ca(2+).

The protein belongs to the peroxidase family. Classical plant (class III) peroxidase subfamily. Requires heme b as cofactor. Ca(2+) is required as a cofactor.

Its subcellular location is the secreted. The catalysed reaction is 2 a phenolic donor + H2O2 = 2 a phenolic radical donor + 2 H2O. In terms of biological role, removal of H(2)O(2), oxidation of toxic reductants, biosynthesis and degradation of lignin, suberization, auxin catabolism, response to environmental stresses such as wounding, pathogen attack and oxidative stress. These functions might be dependent on each isozyme/isoform in each plant tissue. The polypeptide is Peroxidase 67 (PER67) (Arabidopsis thaliana (Mouse-ear cress)).